The chain runs to 284 residues: L-ribulose-5-phosphate 3-epimerase UlaE (284 aa).

The protein belongs to the L-ribulose-5-phosphate 3-epimerase family.

The catalysed reaction is L-ribulose 5-phosphate = L-xylulose 5-phosphate. Its pathway is cofactor degradation; L-ascorbate degradation; D-xylulose 5-phosphate from L-ascorbate: step 3/4. Its function is as follows. Catalyzes the isomerization of L-xylulose-5-phosphate to L-ribulose-5-phosphate. Is involved in the anaerobic L-ascorbate utilization. This is L-ribulose-5-phosphate 3-epimerase UlaE from Salmonella typhimurium (strain LT2 / SGSC1412 / ATCC 700720).